The following is a 3470-amino-acid chain: Dynein axonemal heavy chain 5 (3470 aa).

The interval 1–1938 (MFRIGRRQLW…MIHITDVAFT (1938 aa)) is stem. Residues 899 to 918 (EKVRHENASPNGDTSGGGEG) form a disordered region. 4 AAA regions span residues 1939–2161 (YQNE…VLRT), 2221–2440 (TAIS…IQNL), 2547–2800 (VYPP…IWQG), and 2913–3167 (LYNE…FRRS). ATP-binding positions include 1977 to 1984 (GPAGTGKT) and 2259 to 2266 (GPSGSGKT). Coiled coils occupy residues 3207–3241 (LKEA…VLKE) and 3434–3468 (HALA…AMTE).

This sequence belongs to the dynein heavy chain family. Interacts with DNAL1. Consists of at least two heavy chains and a number of intermediate and light chains.

It is found in the cytoplasm. Its subcellular location is the cytoskeleton. The protein resides in the cilium axoneme. In terms of biological role, force generating protein of respiratory cilia. Produces force towards the minus ends of microtubules. Dynein has ATPase activity; the force-producing power stroke is thought to occur on release of ADP. Required for structural and functional integrity of the cilia of ependymal cells lining the brain ventricles. This is Dynein axonemal heavy chain 5 from Rattus norvegicus (Rat).